Consider the following 836-residue polypeptide: Protein translocase subunit SecA (836 aa).

ATP contacts are provided by residues Gln85, 103 to 107 (GEGKT), and Asp492. 4 residues coordinate Zn(2+): Cys820, Cys822, Cys831, and Cys832.

It belongs to the SecA family. In terms of assembly, monomer and homodimer. Part of the essential Sec protein translocation apparatus which comprises SecA, SecYEG and auxiliary proteins SecDF. Other proteins may also be involved. It depends on Zn(2+) as a cofactor.

It is found in the cell membrane. Its subcellular location is the cytoplasm. It carries out the reaction ATP + H2O + cellular proteinSide 1 = ADP + phosphate + cellular proteinSide 2.. Functionally, part of the Sec protein translocase complex. Interacts with the SecYEG preprotein conducting channel. Has a central role in coupling the hydrolysis of ATP to the transfer of proteins into and across the cell membrane, serving as an ATP-driven molecular motor driving the stepwise translocation of polypeptide chains across the membrane. In Clostridium botulinum (strain Alaska E43 / Type E3), this protein is Protein translocase subunit SecA.